The following is a 117-amino-acid chain: Large ribosomal subunit protein bL20c (117 aa).

This sequence belongs to the bacterial ribosomal protein bL20 family.

The protein resides in the plastid. The protein localises to the chloroplast. Binds directly to 23S ribosomal RNA and is necessary for the in vitro assembly process of the 50S ribosomal subunit. It is not involved in the protein synthesizing functions of that subunit. This is Large ribosomal subunit protein bL20c from Carica papaya (Papaya).